Here is a 376-residue protein sequence, read N- to C-terminus: Queuine tRNA-ribosyltransferase (376 aa).

The active-site Proton acceptor is aspartate 93. Substrate contacts are provided by residues 93–97 (DSGGF), aspartate 147, glutamine 190, and glycine 217. Residues 248-254 (GVGKPDD) form an RNA binding region. Aspartate 267 acts as the Nucleophile in catalysis. Residues cysteine 305, cysteine 307, cysteine 310, and histidine 336 each coordinate Zn(2+).

The protein belongs to the queuine tRNA-ribosyltransferase family. In terms of assembly, homodimer. Within each dimer, one monomer is responsible for RNA recognition and catalysis, while the other monomer binds to the replacement base PreQ1. Zn(2+) is required as a cofactor.

The catalysed reaction is 7-aminomethyl-7-carbaguanine + guanosine(34) in tRNA = 7-aminomethyl-7-carbaguanosine(34) in tRNA + guanine. The protein operates within tRNA modification; tRNA-queuosine biosynthesis. In terms of biological role, catalyzes the base-exchange of a guanine (G) residue with the queuine precursor 7-aminomethyl-7-deazaguanine (PreQ1) at position 34 (anticodon wobble position) in tRNAs with GU(N) anticodons (tRNA-Asp, -Asn, -His and -Tyr). Catalysis occurs through a double-displacement mechanism. The nucleophile active site attacks the C1' of nucleotide 34 to detach the guanine base from the RNA, forming a covalent enzyme-RNA intermediate. The proton acceptor active site deprotonates the incoming PreQ1, allowing a nucleophilic attack on the C1' of the ribose to form the product. After dissociation, two additional enzymatic reactions on the tRNA convert PreQ1 to queuine (Q), resulting in the hypermodified nucleoside queuosine (7-(((4,5-cis-dihydroxy-2-cyclopenten-1-yl)amino)methyl)-7-deazaguanosine). In Cereibacter sphaeroides (strain ATCC 17029 / ATH 2.4.9) (Rhodobacter sphaeroides), this protein is Queuine tRNA-ribosyltransferase.